The primary structure comprises 171 residues: Tetratricopeptide repeat protein 9C (171 aa).

3 TPR repeats span residues 8–41 (AQLY…LRGL), 72–107 (TDCY…QPDN), and 108–141 (AKAL…KPKD).

Belongs to the TTC9 family.

The chain is Tetratricopeptide repeat protein 9C (TTC9C) from Bos taurus (Bovine).